We begin with the raw amino-acid sequence, 323 residues long: Prostaglandin F synthase 2 (323 aa).

NADP(+) is bound by residues 20–24 (GFGTY) and Asp-50. The active-site Proton donor is Tyr-55. Position 117 (His-117) interacts with substrate. Residues 166 to 167 (SN), Gln-190, 216 to 221 (YAALGA), and 270 to 280 (KSFNKKRIKEN) contribute to the NADP(+) site.

This sequence belongs to the aldo/keto reductase family. As to quaternary structure, monomer.

The protein resides in the cytoplasm. It carries out the reaction prostaglandin F2alpha + NADP(+) = prostaglandin D2 + NADPH + H(+). The protein operates within lipid metabolism; prostaglandin biosynthesis. Its function is as follows. Catalyzes the reduction of PGD(2) and PGH(2) to PGF(2 alpha) and a stereoisomer, respectively. It has a broad substrate specificity and also reduces other carbonyl compounds. The polypeptide is Prostaglandin F synthase 2 (Bos taurus (Bovine)).